We begin with the raw amino-acid sequence, 146 residues long: UPF0306 protein CKO_04548 (146 aa).

This sequence belongs to the UPF0306 family.

The protein is UPF0306 protein CKO_04548 of Citrobacter koseri (strain ATCC BAA-895 / CDC 4225-83 / SGSC4696).